A 649-amino-acid chain; its full sequence is Acetyl-coenzyme A synthetase (649 aa).

CoA is bound by residues 189 to 192, T311, and N335; that span reads RGGK. ATP is bound by residues 387-389, 411-416, D500, and R515; these read GEP and DTWWQT. CoA is bound at residue S523. R526 is a binding site for ATP. The Mg(2+) site is built by V537, H539, and V542. CoA is bound at residue R584. K609 is modified (N6-acetyllysine).

The protein belongs to the ATP-dependent AMP-binding enzyme family. Mg(2+) serves as cofactor. Post-translationally, acetylated. Deacetylation by the SIR2-homolog deacetylase activates the enzyme.

The catalysed reaction is acetate + ATP + CoA = acetyl-CoA + AMP + diphosphate. Its function is as follows. Catalyzes the conversion of acetate into acetyl-CoA (AcCoA), an essential intermediate at the junction of anabolic and catabolic pathways. AcsA undergoes a two-step reaction. In the first half reaction, AcsA combines acetate with ATP to form acetyl-adenylate (AcAMP) intermediate. In the second half reaction, it can then transfer the acetyl group from AcAMP to the sulfhydryl group of CoA, forming the product AcCoA. This chain is Acetyl-coenzyme A synthetase, found in Sinorhizobium fredii (strain NBRC 101917 / NGR234).